The primary structure comprises 562 residues: Formate--tetrahydrofolate ligase (562 aa).

Position 71–78 (71–78 (TPAGEGKS)) interacts with ATP.

Belongs to the formate--tetrahydrofolate ligase family.

It catalyses the reaction (6S)-5,6,7,8-tetrahydrofolate + formate + ATP = (6R)-10-formyltetrahydrofolate + ADP + phosphate. The protein operates within one-carbon metabolism; tetrahydrofolate interconversion. This Bacillus cereus (strain AH187) protein is Formate--tetrahydrofolate ligase.